We begin with the raw amino-acid sequence, 64 residues long: Phi-buthitoxin-Hj1a (64 aa).

Residues 1–18 (MNSFVVVLLLFIAILCNA) form the signal peptide. 3 disulfide bridges follow: Cys29/Cys43, Cys36/Cys49, and Cys42/Cys58.

The protein belongs to the scorpion calcin-like family. As to expression, expressed by the venom gland.

The protein localises to the secreted. May increase intracellular calcium release through the activation of nuclear inositol 1,4,5-trisphosphate receptors (ITPR) of cardiomyocytes, thereby causing an increase in the contraction frequency of these cells. In Hottentotta judaicus (Black scorpion), this protein is Phi-buthitoxin-Hj1a.